A 604-amino-acid polypeptide reads, in one-letter code: Lipoprotein LpqB (604 aa).

Positions 1–27 (MTMRAARLSGSTGLTAALVAVLLVLTG) are cleaved as a signal peptide. Cys28 carries N-palmitoyl cysteine lipidation. Cys28 carries S-diacylglycerol cysteine lipidation. Residues 35–60 (SAPQALGTIDREPTSEGPTPPIAGRD) are disordered.

This sequence belongs to the LpqB lipoprotein family.

It is found in the cell membrane. In Nocardia farcinica (strain IFM 10152), this protein is Lipoprotein LpqB.